The chain runs to 268 residues: Ubiquinone biosynthesis protein COQ4 homolog, mitochondrial (268 aa).

Positions 171, 172, 175, and 187 each coordinate Zn(2+).

It belongs to the COQ4 family. Component of a multi-subunit COQ enzyme complex. Zn(2+) serves as cofactor.

The protein localises to the mitochondrion inner membrane. It catalyses the reaction a 4-hydroxy-3-methoxy-5-(all-trans-polyprenyl)benzoate + H(+) = a 2-methoxy-6-(all-trans-polyprenyl)phenol + CO2. It participates in cofactor biosynthesis; ubiquinone biosynthesis. Lyase that catalyzes the C1-decarboxylation of 4-hydroxy-3-methoxy-5-(all-trans-polyprenyl)benzoic acid into 2-methoxy-6-(all-trans-polyprenyl)phenol during ubiquinone biosynthesis. The chain is Ubiquinone biosynthesis protein COQ4 homolog, mitochondrial from Drosophila erecta (Fruit fly).